An 84-amino-acid polypeptide reads, in one-letter code: Small ribosomal subunit protein bS18 (84 aa).

The protein belongs to the bacterial ribosomal protein bS18 family. As to quaternary structure, part of the 30S ribosomal subunit. Forms a tight heterodimer with protein bS6.

Functionally, binds as a heterodimer with protein bS6 to the central domain of the 16S rRNA, where it helps stabilize the platform of the 30S subunit. In Mycoplasma mobile (strain ATCC 43663 / 163K / NCTC 11711) (Mesomycoplasma mobile), this protein is Small ribosomal subunit protein bS18.